A 267-amino-acid polypeptide reads, in one-letter code: GTP cyclohydrolase FolE2 (267 aa).

Belongs to the GTP cyclohydrolase IV family.

The catalysed reaction is GTP + H2O = 7,8-dihydroneopterin 3'-triphosphate + formate + H(+). The protein operates within cofactor biosynthesis; 7,8-dihydroneopterin triphosphate biosynthesis; 7,8-dihydroneopterin triphosphate from GTP: step 1/1. Functionally, converts GTP to 7,8-dihydroneopterin triphosphate. The chain is GTP cyclohydrolase FolE2 from Nitrosococcus oceani (strain ATCC 19707 / BCRC 17464 / JCM 30415 / NCIMB 11848 / C-107).